The following is an 891-amino-acid chain: Extended synaptotagmin-3 (891 aa).

Residues 1–30 (MQPEEPCAPSAPGGPDVPERGQRSRDPGPR) form a disordered region. Residues 1 to 32 (MQPEEPCAPSAPGGPDVPERGQRSRDPGPRLS) are Cytoplasmic-facing. The segment covering 17–28 (VPERGQRSRDPG) has biased composition (basic and acidic residues). A helical membrane pass occupies residues 33 to 53 (GQLLPELYSFVARVLFYLAPV). A topological domain (lumenal) is located at residue Y54. A helical membrane pass occupies residues 55–75 (LAGYLGLSVTWLLLGALLWMW). Residues 76–891 (WRRNRRGKLG…ELTADGQPRS (816 aa)) lie on the Cytoplasmic side of the membrane. In terms of domain architecture, SMP-LTD spans 118-295 (DVERVEWANK…LPNRVTVPVK (178 aa)). C2 domains lie at 292–412 (VPVK…DEWF) and 430–570 (SLLT…QLDH). Ca(2+) is bound by residues K325, D326, D336, D383, E384, D385, D387, D389, and D390. A disordered region spans residues 652-711 (SAATTDPEPMPEPQGPGPEPKGKDSARGLCESPGKKKNPATTFLTVPGLHSPGPIKSPRP). Residues 659–670 (EPMPEPQGPGPE) are compositionally biased toward pro residues. A C2 3 domain is found at 759–881 (RLGEIQLTVR…DLIKGFSQWY (123 aa)). Residues 806 to 813 (RRWASRKK) are required for phosphatidylinositol 4,5-bisphosphate-dependent location at the cell membrane.

The protein belongs to the extended synaptotagmin family.

The protein resides in the cell membrane. It is found in the endoplasmic reticulum membrane. Tethers the endoplasmic reticulum to the cell membrane and promotes the formation of appositions between the endoplasmic reticulum and the cell membrane. Binds glycerophospholipids in a barrel-like domain and may play a role in cellular lipid transport. This chain is Extended synaptotagmin-3 (Esyt3), found in Mus musculus (Mouse).